The sequence spans 99 residues: Keratinocyte differentiation-associated protein (99 aa).

The signal sequence occupies residues 1-22; that stretch reads MKIPVLPAVVLLSLLVLHSAQG.

Highly expressed in skin and detected at lower levels in thymus. In skin, found exclusively in lamellar granules of granular keratinocytes and in the intracellular space of the stratum corneum. Also highly expressed in oral mucosa, tongue, esophagus, and stomach, and at much lower levels in bladder and uterus. Not detected in gastrointestinal mucosa.

It localises to the secreted. Functionally, may act as a soluble regulator of keratinocyte differentiation. May play an important role in embryonic skin morphogenesis. The sequence is that of Keratinocyte differentiation-associated protein (KRTDAP) from Homo sapiens (Human).